The primary structure comprises 383 residues: MATETVGIREIDTGALPDRYARGWHCLGPVKNFSDGKPHSVNIFGTKLVVFADSKGELNVLDAYCRHMGGDLSKGTVKGDEVACPFHDWRWGGDGKCKLVPYAKRTPRLARTRSWHTDVRGGLLFVWHDHEGNPPQPEVRIPEIPEWHSGEWTDWKWNSMLIEGSNCREIIDNVTDMAHFFYIHFGLPTYFKNVFEGHIASQYLHNVGRPDVNDLGTAYGEAKLDSEASYFGPSFMINWLHNTYGEFKAESILINCHYPVTQDSFVLQWGVIVEKPKGLDDATTEKLADAFTEGVSKGFLQDVEIWKHKTRIDNPLLVEEDGAVYQMRRWYQQFYVDVADITPDMTDRFEMEVDTTAAVEKWNIEVQENLKAQAEAEKAEQSS.

Positions 24 to 126 (WHCLGPVKNF…TDVRGGLLFV (103 aa)) constitute a Rieske domain. [2Fe-2S] cluster is bound by residues cysteine 65, histidine 67, cysteine 84, and histidine 87. Positions 173, 179, 184, and 302 each coordinate Fe cation.

In terms of assembly, homotrimer. The two-component system 3-ketosteroid-9-alpha-monooxygenase is composed of an oxygenase component KshA and a reductase component KshB. [2Fe-2S] cluster is required as a cofactor. It depends on Fe cation as a cofactor.

The enzyme catalyses androsta-1,4-diene-3,17-dione + 2 reduced [2Fe-2S]-[ferredoxin] + O2 + 2 H(+) = 9alpha-hydroxyandrosta-1,4-diene-3,17-dione + 2 oxidized [2Fe-2S]-[ferredoxin] + H2O. It functions in the pathway lipid metabolism; steroid biosynthesis. Functionally, involved in the degradation of cholesterol. Catalyzes the introduction of a 9a-hydroxyl moiety into 1,4-androstadiene-3,17-dione (ADD) to yield the 9alpha-hydroxy-1,4-androstadiene-3,17-dione (9OHADD) intermediate which spontaneously form 3-hydroxy-9,10-seconandrost-1,3,5(10)-triene-9,17-dione (HSA) via the meta-cleavage of ring B with concomitant aromatization of ring A. This Mycolicibacterium smegmatis (strain ATCC 700084 / mc(2)155) (Mycobacterium smegmatis) protein is 3-ketosteroid-9-alpha-monooxygenase, oxygenase component (kshA).